The chain runs to 429 residues: Cell cycle protein kinase spo4 (429 aa).

Residues 40-402 (YHVVKLVGAG…KAKTALQHEF (363 aa)) enclose the Protein kinase domain. Residues 46-54 (VGAGSFSSV) and K95 contribute to the ATP site. The Proton acceptor role is filled by D182. Residue T264 is modified to Phosphothreonine.

The protein belongs to the protein kinase superfamily. Ser/Thr protein kinase family. CDC7 subfamily. As to quaternary structure, interacts with spo6.

The protein resides in the nucleus. It carries out the reaction L-seryl-[protein] + ATP = O-phospho-L-seryl-[protein] + ADP + H(+). The enzyme catalyses L-threonyl-[protein] + ATP = O-phospho-L-threonyl-[protein] + ADP + H(+). Functionally, required for the initiation of meiosis II and progression through anaphase II. This is Cell cycle protein kinase spo4 (spo4) from Schizosaccharomyces pombe (strain 972 / ATCC 24843) (Fission yeast).